Consider the following 208-residue polypeptide: MFAIVDYDTGNTRNLKKAFDYLQVSTILTADPQQLAAADAVILPGVGAFAAAMAALKERQLVGVLQALARSGKPVLGICLGMQLLFESSSEYGEHAGLGLLSGRVSALPTDLNVKVPQMGWNQNELRRPDSPFASIDAAYTYFVHSYYAVCPATEIVATVQHGVQVPSIVQQQNVIGMQFHPEKSGRVGLQQLAAFKEMVSANDFSSN.

Residues 1–206 (MFAIVDYDTG…KEMVSANDFS (206 aa)) enclose the Glutamine amidotransferase type-1 domain. The Nucleophile role is filled by Cys79. Catalysis depends on residues His181 and Glu183.

In terms of assembly, heterodimer of HisH and HisF.

Its subcellular location is the cytoplasm. The catalysed reaction is 5-[(5-phospho-1-deoxy-D-ribulos-1-ylimino)methylamino]-1-(5-phospho-beta-D-ribosyl)imidazole-4-carboxamide + L-glutamine = D-erythro-1-(imidazol-4-yl)glycerol 3-phosphate + 5-amino-1-(5-phospho-beta-D-ribosyl)imidazole-4-carboxamide + L-glutamate + H(+). It carries out the reaction L-glutamine + H2O = L-glutamate + NH4(+). Its pathway is amino-acid biosynthesis; L-histidine biosynthesis; L-histidine from 5-phospho-alpha-D-ribose 1-diphosphate: step 5/9. IGPS catalyzes the conversion of PRFAR and glutamine to IGP, AICAR and glutamate. The HisH subunit catalyzes the hydrolysis of glutamine to glutamate and ammonia as part of the synthesis of IGP and AICAR. The resulting ammonia molecule is channeled to the active site of HisF. The polypeptide is Imidazole glycerol phosphate synthase subunit HisH (Lactiplantibacillus plantarum (strain ATCC BAA-793 / NCIMB 8826 / WCFS1) (Lactobacillus plantarum)).